The sequence spans 245 residues: Putative protein phosphatase 2C-like protein 45 (245 aa).

In terms of domain architecture, PPM-type phosphatase spans 1–188 (MEDRFSTITN…DDISVMLIPL (188 aa)).

This sequence belongs to the PP2C family.

The chain is Putative protein phosphatase 2C-like protein 45 from Arabidopsis thaliana (Mouse-ear cress).